We begin with the raw amino-acid sequence, 408 residues long: Exo-alpha-sialidase ARB_03431 (408 aa).

Positions 1-22 are cleaved as a signal peptide; that stretch reads MGIKQWLLSLVVVAISATATQA. Residues Arg62, Arg81, Asp87, and Gln150 each coordinate substrate. The N-linked (GlcNAc...) asparagine glycan is linked to Asn237. Substrate-binding positions include Arg267, Arg324, 324–325, 333–334, Lys339, Tyr360, Asp378, and 378–380; these read RT, YD, and DWY. N-linked (GlcNAc...) asparagine glycosylation is present at Asn398.

This sequence belongs to the glycosyl hydrolase 33 family.

The protein localises to the secreted. It carries out the reaction Hydrolysis of alpha-(2-&gt;3)-, alpha-(2-&gt;6)-, alpha-(2-&gt;8)- glycosidic linkages of terminal sialic acid residues in oligosaccharides, glycoproteins, glycolipids, colominic acid and synthetic substrates.. Functionally, sialidase is able to release sialic acid from a wide variety of natural substrates. The sequence is that of Exo-alpha-sialidase ARB_03431 from Arthroderma benhamiae (strain ATCC MYA-4681 / CBS 112371) (Trichophyton mentagrophytes).